The following is a 983-amino-acid chain: Protein translocase subunit SecA (983 aa).

Residues Gln83, 101–105 (GEGKT), and Asp489 contribute to the ATP site. A disordered region spans residues 948–983 (ISSEEEDNNEKTNINNNEDLERTKGEAQQTAKNPNE). Over residues 973–983 (EAQQTAKNPNE) the composition is skewed to polar residues.

Belongs to the SecA family. In terms of assembly, monomer and homodimer. Part of the essential Sec protein translocation apparatus which comprises SecA, SecYEG and auxiliary proteins SecDF. Other proteins may also be involved.

Its subcellular location is the cell membrane. The protein localises to the cytoplasm. The catalysed reaction is ATP + H2O + cellular proteinSide 1 = ADP + phosphate + cellular proteinSide 2.. Functionally, part of the Sec protein translocase complex. Interacts with the SecYEG preprotein conducting channel. Has a central role in coupling the hydrolysis of ATP to the transfer of proteins into and across the cell membrane, serving as an ATP-driven molecular motor driving the stepwise translocation of polypeptide chains across the membrane. This chain is Protein translocase subunit SecA, found in Mesomycoplasma hyopneumoniae (strain J / ATCC 25934 / NCTC 10110) (Mycoplasma hyopneumoniae).